We begin with the raw amino-acid sequence, 167 residues long: Ribosome maturation factor RimM (167 aa).

The region spanning 94–167 is the PRC barrel domain; sequence EENEYFIKDL…VMVVHLLEGL (74 aa).

Belongs to the RimM family. Binds ribosomal protein uS19.

The protein localises to the cytoplasm. An accessory protein needed during the final step in the assembly of 30S ribosomal subunit, possibly for assembly of the head region. Essential for efficient processing of 16S rRNA. May be needed both before and after RbfA during the maturation of 16S rRNA. It has affinity for free ribosomal 30S subunits but not for 70S ribosomes. This is Ribosome maturation factor RimM from Thermoanaerobacter pseudethanolicus (strain ATCC 33223 / 39E) (Clostridium thermohydrosulfuricum).